A 302-amino-acid chain; its full sequence is MTPGLIVICGPTATGKSSLALALARRLGAPILSADSRQVYRGFDIGTAKPSVTDQEDVPHYLIDICDPTETLTVADYQEQAQALIAQFHTEGQTPILVGGTGLYIRAIVEGLKIPRVPPQLELRSQLQSQGQVQIYQWLQQVDPPAAQKIHAHDQVRTLRALEVFYTTGIPLSAQQGKNPPSYPILQIGLDISDLDQHTDIIQQRTAAMVEQGWLTEVQKLIDHYGVELPLLATLGYQEMKAYLHQQITLEEATAQTILHTRQFAKRQRTWFRANSGIHWFDATNSDLLSLVWKDIQGQPWL.

10–17 (GPTATGKS) contacts ATP. Residue 12-17 (TATGKS) participates in substrate binding. An interaction with substrate tRNA region spans residues 35–38 (DSRQ).

It belongs to the IPP transferase family. Monomer. It depends on Mg(2+) as a cofactor.

It catalyses the reaction adenosine(37) in tRNA + dimethylallyl diphosphate = N(6)-dimethylallyladenosine(37) in tRNA + diphosphate. Its function is as follows. Catalyzes the transfer of a dimethylallyl group onto the adenine at position 37 in tRNAs that read codons beginning with uridine, leading to the formation of N6-(dimethylallyl)adenosine (i(6)A). The protein is tRNA dimethylallyltransferase of Acaryochloris marina (strain MBIC 11017).